The sequence spans 339 residues: Trace amine-associated receptor 2 (339 aa).

The Extracellular portion of the chain corresponds to 1-36 (MASFEAQQETFDCSEYGNGSCPENERSLGVRAAMYS). The N-linked (GlcNAc...) asparagine glycan is linked to asparagine 18. Cystine bridges form between cysteine 21/cysteine 185 and cysteine 104/cysteine 189. The helical transmembrane segment at 37–57 (LMACAIFITIFGNLAMIISIS) threads the bilayer. At 58–67 (YFKQLHTPTN) the chain is on the cytoplasmic side. A helical membrane pass occupies residues 68 to 88 (LLILSMAVTDFLLGFTIMPYS). Residues 89–106 (MVRSVENCWYFGLTFCKI) are Extracellular-facing. Residues 107 to 127 (HYSFDLMLSITSIFHLCSVAV) form a helical membrane-spanning segment. Over 128-150 (DRFYAICHPLHYCTKMTIPVVRR) the chain is Cytoplasmic. A helical membrane pass occupies residues 151-171 (LLLVCWSVPGAFAFGVVFSEA). Over 172–195 (YADGIEGYDILVACSSSCPVMFNK) the chain is Extracellular. A helical membrane pass occupies residues 196–216 (LWGTTLFVAGFFTPSSMMVGI). The Cytoplasmic segment spans residues 217–251 (YGKIFAVSKKHARVIDNLPENQNNQMRKDKKAAKT). The chain crosses the membrane as a helical span at residues 252-272 (LGIVMGVFLLCWFPCFFTILL). The Extracellular segment spans residues 273–287 (DPFLNFSTPAVLFDA). N-linked (GlcNAc...) asparagine glycosylation is present at asparagine 277. A helical transmembrane segment spans residues 288–310 (LTWFGYFNSTCNPLIYGFFYPWF). Over 311 to 339 (RRALKYILLGKIFSSHFHNTNLFTQKETE) the chain is Cytoplasmic.

This sequence belongs to the G-protein coupled receptor 1 family. Mainly expressed in neurons of the olfactory epithelium. Also present in the limbic brain areas receiving projection from the olfactory system and several brain regions, including the hippocampus, cerebellum, cortex, raphe nuclei, hypothalamus and habenula.

The protein localises to the cell membrane. Orphan olfactory receptor specific for trace amines. Trace amine compounds are enriched in animal body fluids and act on trace amine-associated receptors (TAARs) to elicit both intraspecific and interspecific innate behaviors. Ligand-binding causes a conformation change that triggers signaling via the G(s)-class of G-proteins which activate adenylate cyclase. May also be required to provide olfactory input into limbic brain areas to regulate emotional behaviors likely via modulation of the dopamine system. This is Trace amine-associated receptor 2 from Mus musculus (Mouse).